The sequence spans 189 residues: GMP synthase [glutamine-hydrolyzing] subunit A (189 aa).

The 185-residue stretch at R3 to A187 folds into the Glutamine amidotransferase type-1 domain. C73 acts as the Nucleophile in catalysis. Catalysis depends on residues H161 and E163.

Heterodimer composed of a glutamine amidotransferase subunit (A) and a GMP-binding subunit (B).

It carries out the reaction XMP + L-glutamine + ATP + H2O = GMP + L-glutamate + AMP + diphosphate + 2 H(+). It functions in the pathway purine metabolism; GMP biosynthesis; GMP from XMP (L-Gln route): step 1/1. In terms of biological role, catalyzes the synthesis of GMP from XMP. In Haloarcula marismortui (strain ATCC 43049 / DSM 3752 / JCM 8966 / VKM B-1809) (Halobacterium marismortui), this protein is GMP synthase [glutamine-hydrolyzing] subunit A.